A 391-amino-acid polypeptide reads, in one-letter code: Curcumin synthase 2 (391 aa).

Cys166 is a catalytic residue.

The protein belongs to the thiolase-like superfamily. Chalcone/stilbene synthases family. In terms of assembly, homodimer.

It carries out the reaction (E)-feruloylacetyl-CoA + (E)-feruloyl-CoA + H2O = curcumin + CO2 + 2 CoA. Its pathway is secondary metabolite biosynthesis; flavonoid biosynthesis. In terms of biological role, catalyzes the synthesis of curcumin by condensing feruloyl-CoA with a diketide-CoA in the curcuminoid biosynthesis. The chain is Curcumin synthase 2 (CURS2) from Curcuma longa (Turmeric).